The chain runs to 406 residues: MDLFPVLKELAQKTPSKILLIVLDGVGGLPLEPGGPTELEAAKTPNLDRLAEESALGLLTPVYPGLAPGSGPGHLALFGYDPFRYVVGRGALSALGLGADFREGDVALRGNFATLDPEGKVVDRRAGRPPTEENQRVIAKLKEAIPRIEDVEVLFYTESEHRFLVILRGEGLEDKVTDTDPQKTGLPPLKAKALDEASERTARLVNLLSERIREVLKDEPRMNGALFRGASKKPSFPRMQEVYKLTPAAIASYPMYKGLASLVGMEVLPVEGEGDALEGKLKALKENWGRYDFFYFHVKKTDAMGEDGNFHGKVEKVELFDALLPEILALGPDVLAITGDHSTPALLKAHSWHPVPLLLKAPYLRADEARRFTEREAQRGSLGHLRGVELMPLLLAHAGKLLKYGA.

It belongs to the BPG-independent phosphoglycerate mutase family. A-PGAM subfamily.

It carries out the reaction (2R)-2-phosphoglycerate = (2R)-3-phosphoglycerate. The protein operates within carbohydrate degradation; glycolysis; pyruvate from D-glyceraldehyde 3-phosphate: step 3/5. Its function is as follows. Catalyzes the interconversion of 2-phosphoglycerate and 3-phosphoglycerate. In Thermus thermophilus (strain ATCC 27634 / DSM 579 / HB8), this protein is Probable 2,3-bisphosphoglycerate-independent phosphoglycerate mutase.